Here is a 158-residue protein sequence, read N- to C-terminus: Globin CTT-I/CTT-IA (158 aa).

The signal sequence occupies residues 1–15; it reads MKFLILALCVAAAMA. The Globin domain occupies 16–158; sequence GPSGDQIAAA…FVFSTLKNEL (143 aa). Positions 74 and 109 each coordinate heme b.

The protein belongs to the globin family. In terms of assembly, monomer.

The sequence is that of Globin CTT-I/CTT-IA (CTT-1) from Chironomus thummi thummi (Midge).